A 343-amino-acid polypeptide reads, in one-letter code: tRNA-specific 2-thiouridylase MnmA 2 (343 aa).

Residues Gly-7–Ser-14 and Leu-33 each bind ATP. Cys-91 (nucleophile) is an active-site residue. Cys-91 and Cys-189 are disulfide-bonded. Gly-115 contributes to the ATP binding site. The interaction with tRNA stretch occupies residues Lys-139 to Gln-141. Catalysis depends on Cys-189, which acts as the Cysteine persulfide intermediate.

This sequence belongs to the MnmA/TRMU family.

It is found in the cytoplasm. It catalyses the reaction S-sulfanyl-L-cysteinyl-[protein] + uridine(34) in tRNA + AH2 + ATP = 2-thiouridine(34) in tRNA + L-cysteinyl-[protein] + A + AMP + diphosphate + H(+). Its function is as follows. Catalyzes the 2-thiolation of uridine at the wobble position (U34) of tRNA, leading to the formation of s(2)U34. This is tRNA-specific 2-thiouridylase MnmA 2 from Fusobacterium nucleatum subsp. nucleatum (strain ATCC 25586 / DSM 15643 / BCRC 10681 / CIP 101130 / JCM 8532 / KCTC 2640 / LMG 13131 / VPI 4355).